The primary structure comprises 573 residues: Urease subunit alpha (573 aa).

The region spanning G136–F573 is the Urease domain. H141, H143, and K224 together coordinate Ni(2+). K224 carries the post-translational modification N6-carboxylysine. Residue H226 participates in substrate binding. 2 residues coordinate Ni(2+): H253 and H279. H327 acts as the Proton donor in catalysis. Residue D367 coordinates Ni(2+).

This sequence belongs to the metallo-dependent hydrolases superfamily. Urease alpha subunit family. In terms of assembly, heterotrimer of UreA (gamma), UreB (beta) and UreC (alpha) subunits. Three heterotrimers associate to form the active enzyme. It depends on Ni cation as a cofactor. Carboxylation allows a single lysine to coordinate two nickel ions.

The protein resides in the cytoplasm. It carries out the reaction urea + 2 H2O + H(+) = hydrogencarbonate + 2 NH4(+). It functions in the pathway nitrogen metabolism; urea degradation; CO(2) and NH(3) from urea (urease route): step 1/1. The protein is Urease subunit alpha of Mycolicibacterium vanbaalenii (strain DSM 7251 / JCM 13017 / BCRC 16820 / KCTC 9966 / NRRL B-24157 / PYR-1) (Mycobacterium vanbaalenii).